The following is a 554-amino-acid chain: Glucose-6-phosphate isomerase (554 aa).

Glu359 acts as the Proton donor in catalysis. Active-site residues include His390 and Lys518.

The protein belongs to the GPI family.

It is found in the cytoplasm. It catalyses the reaction alpha-D-glucose 6-phosphate = beta-D-fructose 6-phosphate. The protein operates within carbohydrate biosynthesis; gluconeogenesis. It functions in the pathway carbohydrate degradation; glycolysis; D-glyceraldehyde 3-phosphate and glycerone phosphate from D-glucose: step 2/4. Its function is as follows. Catalyzes the reversible isomerization of glucose-6-phosphate to fructose-6-phosphate. The sequence is that of Glucose-6-phosphate isomerase from Pseudomonas savastanoi pv. phaseolicola (strain 1448A / Race 6) (Pseudomonas syringae pv. phaseolicola (strain 1448A / Race 6)).